A 578-amino-acid polypeptide reads, in one-letter code: Putative transporter B0361.11 (578 aa).

The tract at residues M1–R30 is disordered. 11 helical membrane passes run I51–M71, F148–A168, I182–I202, A232–V252, Y263–S283, I339–I359, A373–M393, M399–L419, L426–W446, S457–V477, and W486–L506. Positions A532–S550 are enriched in low complexity. The segment at A532–S561 is disordered.

Belongs to the major facilitator superfamily. Sugar transporter (TC 2.A.1.1) family.

The protein localises to the membrane. The sequence is that of Putative transporter B0361.11 from Caenorhabditis elegans.